The primary structure comprises 183 residues: Apo-citrate lyase phosphoribosyl-dephospho-CoA transferase (183 aa).

It belongs to the CitX family.

It catalyses the reaction apo-[citrate lyase ACP] + 2'-(5''-triphospho-alpha-D-ribosyl)-3'-dephospho-CoA = holo-[citrate lyase ACP] + diphosphate. Transfers 2-(5''-triphosphoribosyl)-3'-dephosphocoenzyme-A on a serine residue to the apo-acyl carrier protein (gamma chain) of the citrate lyase to yield holo-acyl carrier protein. The chain is Apo-citrate lyase phosphoribosyl-dephospho-CoA transferase from Escherichia coli O7:K1 (strain IAI39 / ExPEC).